The sequence spans 452 residues: Bifunctional protein GlmU (452 aa).

Positions 1 to 226 are pyrophosphorylase; the sequence is MSLDIVILAA…AMEVQGANDR (226 aa). Residues 8–11, lysine 22, glutamine 73, 78–79, 99–101, glycine 136, glutamate 151, asparagine 166, and asparagine 224 contribute to the UDP-N-acetyl-alpha-D-glucosamine site; these read LAAG, GT, and YGD. Aspartate 101 provides a ligand contact to Mg(2+). Residue asparagine 224 coordinates Mg(2+). Residues 227–247 form a linker region; that stretch reads IQLAELERHYQLRAARRLMAQ. Positions 248–452 are N-acetyltransferase; sequence GVTLRDPARF…IDGWQRPTKK (205 aa). Arginine 330 and lysine 348 together coordinate UDP-N-acetyl-alpha-D-glucosamine. Residue histidine 360 is the Proton acceptor of the active site. Tyrosine 363 and asparagine 374 together coordinate UDP-N-acetyl-alpha-D-glucosamine. Residues alanine 377, 383 to 384, serine 402, alanine 420, and arginine 437 each bind acetyl-CoA; that span reads NY.

It in the N-terminal section; belongs to the N-acetylglucosamine-1-phosphate uridyltransferase family. In the C-terminal section; belongs to the transferase hexapeptide repeat family. In terms of assembly, homotrimer. The cofactor is Mg(2+).

The protein localises to the cytoplasm. The enzyme catalyses alpha-D-glucosamine 1-phosphate + acetyl-CoA = N-acetyl-alpha-D-glucosamine 1-phosphate + CoA + H(+). The catalysed reaction is N-acetyl-alpha-D-glucosamine 1-phosphate + UTP + H(+) = UDP-N-acetyl-alpha-D-glucosamine + diphosphate. It participates in nucleotide-sugar biosynthesis; UDP-N-acetyl-alpha-D-glucosamine biosynthesis; N-acetyl-alpha-D-glucosamine 1-phosphate from alpha-D-glucosamine 6-phosphate (route II): step 2/2. The protein operates within nucleotide-sugar biosynthesis; UDP-N-acetyl-alpha-D-glucosamine biosynthesis; UDP-N-acetyl-alpha-D-glucosamine from N-acetyl-alpha-D-glucosamine 1-phosphate: step 1/1. Its pathway is bacterial outer membrane biogenesis; LPS lipid A biosynthesis. Functionally, catalyzes the last two sequential reactions in the de novo biosynthetic pathway for UDP-N-acetylglucosamine (UDP-GlcNAc). The C-terminal domain catalyzes the transfer of acetyl group from acetyl coenzyme A to glucosamine-1-phosphate (GlcN-1-P) to produce N-acetylglucosamine-1-phosphate (GlcNAc-1-P), which is converted into UDP-GlcNAc by the transfer of uridine 5-monophosphate (from uridine 5-triphosphate), a reaction catalyzed by the N-terminal domain. In Stutzerimonas stutzeri (strain A1501) (Pseudomonas stutzeri), this protein is Bifunctional protein GlmU.